A 142-amino-acid polypeptide reads, in one-letter code: Tol-Pal system protein TolR (142 aa).

Residues 1 to 17 (MARARGRGRRDLKSEIN) lie on the Cytoplasmic side of the membrane. Residues 18-38 (IVPLLDVLLVLLLIFMATAPI) traverse the membrane as a helical segment. At 39-142 (ITQSVEVDLP…KSVGLMTQPI (104 aa)) the chain is on the periplasmic side.

It belongs to the ExbD/TolR family. The Tol-Pal system is composed of five core proteins: the inner membrane proteins TolA, TolQ and TolR, the periplasmic protein TolB and the outer membrane protein Pal. They form a network linking the inner and outer membranes and the peptidoglycan layer.

The protein resides in the cell inner membrane. In terms of biological role, part of the Tol-Pal system, which plays a role in outer membrane invagination during cell division and is important for maintaining outer membrane integrity. Required, with TolQ, for the proton motive force-dependent activation of TolA and for TolA-Pal interaction. The sequence is that of Tol-Pal system protein TolR from Escherichia coli O157:H7.